The primary structure comprises 327 residues: tRNA N6-adenosine threonylcarbamoyltransferase (327 aa).

Positions 109 and 113 each coordinate Fe cation. Substrate contacts are provided by residues 132–136 (MVSGG), aspartate 165, glycine 178, aspartate 182, and asparagine 268. Aspartate 296 contributes to the Fe cation binding site.

This sequence belongs to the KAE1 / TsaD family. Fe(2+) is required as a cofactor.

It localises to the cytoplasm. It carries out the reaction L-threonylcarbamoyladenylate + adenosine(37) in tRNA = N(6)-L-threonylcarbamoyladenosine(37) in tRNA + AMP + H(+). Its function is as follows. Required for the formation of a threonylcarbamoyl group on adenosine at position 37 (t(6)A37) in tRNAs that read codons beginning with adenine. Is involved in the transfer of the threonylcarbamoyl moiety of threonylcarbamoyl-AMP (TC-AMP) to the N6 group of A37, together with TsaE and TsaB. TsaD likely plays a direct catalytic role in this reaction. In Thermotoga petrophila (strain ATCC BAA-488 / DSM 13995 / JCM 10881 / RKU-1), this protein is tRNA N6-adenosine threonylcarbamoyltransferase.